The following is a 555-amino-acid chain: Protein FAM234A (555 aa).

The span at 1–22 shows a compositional bias: basic and acidic residues; sequence MMDNKDLEAEIHPLKNEDKKSQ. A disordered region spans residues 1 to 40; it reads MMDNKDLEAEIHPLKNEDKKSQENPGNLPRNEDNLKSKPV. The Cytoplasmic segment spans residues 1–49; sequence MMDNKDLEAEIHPLKNEDKKSQENPGNLPRNEDNLKSKPVPSRLSRCRT. Position 21 is a phosphoserine (Ser-21). The chain crosses the membrane as a helical; Signal-anchor for type II membrane protein span at residues 50–70; sequence VAFFLSLFTCLFVVFVLSFII. The Extracellular portion of the chain corresponds to 71-555; sequence PCPDRPSSQG…FSRLRYRSEM (485 aa). N-linked (GlcNAc...) asparagine glycans are attached at residues Asn-116, Asn-120, Asn-317, Asn-392, and Asn-476.

This sequence belongs to the FAM234 family.

It is found in the membrane. In Mus musculus (Mouse), this protein is Protein FAM234A.